The following is a 331-amino-acid chain: D-alanine--D-alanine ligase (331 aa).

An ATP-grasp domain is found at 121–327; sequence KLWYDALGIP…FSQFLENCVR (207 aa). Residue 151–206 coordinates ATP; that stretch reads AFESWGKVFVKAARQGSSVGCYQVNQVEELSEAINKAFTFSDQVLIEKSVVPRELE. Residues D281, E294, and N296 each coordinate Mg(2+).

The protein belongs to the D-alanine--D-alanine ligase family. Mg(2+) is required as a cofactor. It depends on Mn(2+) as a cofactor.

Its subcellular location is the cytoplasm. The enzyme catalyses 2 D-alanine + ATP = D-alanyl-D-alanine + ADP + phosphate + H(+). It participates in cell wall biogenesis; peptidoglycan biosynthesis. In terms of biological role, cell wall formation. The chain is D-alanine--D-alanine ligase from Vibrio atlanticus (strain LGP32) (Vibrio splendidus (strain Mel32)).